The primary structure comprises 554 residues: Eukaryotic translation initiation factor 3 subunit D-2 (554 aa).

Positions 291–305 (QFDLLTVNETALEPP) are RNA gate. The interval 530–554 (NAFDSDGNEDEETSEDRPFLKSMAN) is disordered.

This sequence belongs to the eIF-3 subunit D family. In terms of assembly, component of the eukaryotic translation initiation factor 3 (eIF-3) complex. The eIF-3 complex interacts with pix.

It is found in the cytoplasm. MRNA cap-binding component of the eukaryotic translation initiation factor 3 (eIF-3) complex, which is involved in protein synthesis of a specialized repertoire of mRNAs and, together with other initiation factors, stimulates binding of mRNA and methionyl-tRNAi to the 40S ribosome. The eIF-3 complex specifically targets and initiates translation of a subset of mRNAs involved in cell proliferation. In the eIF-3 complex, eif3d specifically recognizes and binds the 7-methylguanosine cap of a subset of mRNAs. In Drosophila mojavensis (Fruit fly), this protein is Eukaryotic translation initiation factor 3 subunit D-2.